Reading from the N-terminus, the 557-residue chain is Dihydroxy-acid dehydratase (557 aa).

Cys-49 contacts [2Fe-2S] cluster. Residue Asp-81 coordinates Mg(2+). Residue Cys-122 participates in [2Fe-2S] cluster binding. Mg(2+) contacts are provided by Asp-123 and Lys-124. Residue Lys-124 is modified to N6-carboxylysine. Cys-194 is a [2Fe-2S] cluster binding site. Glu-446 serves as a coordination point for Mg(2+). Ser-472 acts as the Proton acceptor in catalysis.

Belongs to the IlvD/Edd family. In terms of assembly, homodimer. Requires [2Fe-2S] cluster as cofactor. Mg(2+) is required as a cofactor.

It catalyses the reaction (2R)-2,3-dihydroxy-3-methylbutanoate = 3-methyl-2-oxobutanoate + H2O. It carries out the reaction (2R,3R)-2,3-dihydroxy-3-methylpentanoate = (S)-3-methyl-2-oxopentanoate + H2O. Its pathway is amino-acid biosynthesis; L-isoleucine biosynthesis; L-isoleucine from 2-oxobutanoate: step 3/4. It participates in amino-acid biosynthesis; L-valine biosynthesis; L-valine from pyruvate: step 3/4. Its function is as follows. Functions in the biosynthesis of branched-chain amino acids. Catalyzes the dehydration of (2R,3R)-2,3-dihydroxy-3-methylpentanoate (2,3-dihydroxy-3-methylvalerate) into 2-oxo-3-methylpentanoate (2-oxo-3-methylvalerate) and of (2R)-2,3-dihydroxy-3-methylbutanoate (2,3-dihydroxyisovalerate) into 2-oxo-3-methylbutanoate (2-oxoisovalerate), the penultimate precursor to L-isoleucine and L-valine, respectively. In Prochlorococcus marinus (strain MIT 9312), this protein is Dihydroxy-acid dehydratase.